The chain runs to 308 residues: Aspartate carbamoyltransferase catalytic subunit (308 aa).

Residues arginine 55 and threonine 56 each coordinate carbamoyl phosphate. L-aspartate is bound at residue lysine 83. Arginine 105, histidine 133, and glutamine 136 together coordinate carbamoyl phosphate. L-aspartate contacts are provided by arginine 166 and arginine 220. The carbamoyl phosphate site is built by glycine 261 and proline 262.

It belongs to the aspartate/ornithine carbamoyltransferase superfamily. ATCase family. In terms of assembly, heterododecamer (2C3:3R2) of six catalytic PyrB chains organized as two trimers (C3), and six regulatory PyrI chains organized as three dimers (R2).

It catalyses the reaction carbamoyl phosphate + L-aspartate = N-carbamoyl-L-aspartate + phosphate + H(+). The protein operates within pyrimidine metabolism; UMP biosynthesis via de novo pathway; (S)-dihydroorotate from bicarbonate: step 2/3. Functionally, catalyzes the condensation of carbamoyl phosphate and aspartate to form carbamoyl aspartate and inorganic phosphate, the committed step in the de novo pyrimidine nucleotide biosynthesis pathway. The polypeptide is Aspartate carbamoyltransferase catalytic subunit (Chlorobium phaeobacteroides (strain DSM 266 / SMG 266 / 2430)).